A 477-amino-acid polypeptide reads, in one-letter code: Ribulose bisphosphate carboxylase large chain (477 aa).

Residues 1–2 (MS) constitute a propeptide that is removed on maturation. The residue at position 3 (Pro-3) is an N-acetylproline. Lys-14 is modified (N6,N6,N6-trimethyllysine). Asn-123 and Thr-173 together coordinate substrate. Lys-175 acts as the Proton acceptor in catalysis. Lys-177 contacts substrate. 3 residues coordinate Mg(2+): Lys-201, Asp-203, and Glu-204. At Lys-201 the chain carries N6-carboxylysine. The active-site Proton acceptor is the His-294. 3 residues coordinate substrate: Arg-295, His-327, and Ser-379.

The protein belongs to the RuBisCO large chain family. Type I subfamily. As to quaternary structure, heterohexadecamer of 8 large chains and 8 small chains; disulfide-linked. The disulfide link is formed within the large subunit homodimers. Requires Mg(2+) as cofactor. In terms of processing, the disulfide bond which can form in the large chain dimeric partners within the hexadecamer appears to be associated with oxidative stress and protein turnover.

It is found in the plastid. The protein localises to the chloroplast. It catalyses the reaction 2 (2R)-3-phosphoglycerate + 2 H(+) = D-ribulose 1,5-bisphosphate + CO2 + H2O. The enzyme catalyses D-ribulose 1,5-bisphosphate + O2 = 2-phosphoglycolate + (2R)-3-phosphoglycerate + 2 H(+). Its function is as follows. RuBisCO catalyzes two reactions: the carboxylation of D-ribulose 1,5-bisphosphate, the primary event in carbon dioxide fixation, as well as the oxidative fragmentation of the pentose substrate in the photorespiration process. Both reactions occur simultaneously and in competition at the same active site. This is Ribulose bisphosphate carboxylase large chain from Nicotiana debneyi (Debney's tobacco).